Reading from the N-terminus, the 63-residue chain is Bowman-birk type proteinase inhibitor 2 (63 aa).

Intrachain disulfides connect Cys7/Cys61, Cys8/Cys23, Cys11/Cys57, Cys13/Cys21, Cys31/Cys38, Cys35/Cys50, and Cys40/Cys48.

Belongs to the Bowman-Birk serine protease inhibitor family. As to quaternary structure, exists as a dimer in its native form.

In terms of biological role, inhibits trypsin, chymotrypsin, plasmin and factor XIIa. Does not inhibit factor Xa, thrombin, human plasma kallikrein, porcine pancreatic kallikrein and human urinary kallikrein. The sequence is that of Bowman-birk type proteinase inhibitor 2 from Amburana cearensis (Cerejeira).